We begin with the raw amino-acid sequence, 795 residues long: Protein translocase subunit SecA 2 (795 aa).

Residues glutamine 84, 102–106 (GEGKT), and aspartate 496 each bind ATP.

It belongs to the SecA family. In terms of assembly, monomer and homodimer. Part of the essential Sec protein translocation apparatus which comprises SecA, SecYEG and auxiliary proteins SecDF. Other proteins may also be involved.

The protein resides in the cell membrane. Its subcellular location is the cytoplasm. It carries out the reaction ATP + H2O + cellular proteinSide 1 = ADP + phosphate + cellular proteinSide 2.. Its function is as follows. Part of the Sec protein translocase complex. Interacts with the SecYEG preprotein conducting channel. Has a central role in coupling the hydrolysis of ATP to the transfer of proteins into and across the cell membrane, serving as an ATP-driven molecular motor driving the stepwise translocation of polypeptide chains across the membrane. The sequence is that of Protein translocase subunit SecA 2 from Streptococcus agalactiae serotype V (strain ATCC BAA-611 / 2603 V/R).